The following is a 757-amino-acid chain: 5-methyltetrahydropteroyltriglutamate--homocysteine methyltransferase (757 aa).

5-methyltetrahydropteroyltri-L-glutamate contacts are provided by residues 16–19 and K112; that span reads RELK. Residues 433-435 and E486 each bind L-homocysteine; that span reads IGS. Residues 433–435 and E486 each bind L-methionine; that span reads IGS. 5-methyltetrahydropteroyltri-L-glutamate contacts are provided by residues 517–518 and W563; that span reads RC. L-homocysteine is bound at residue D601. D601 is an L-methionine binding site. A 5-methyltetrahydropteroyltri-L-glutamate-binding site is contributed by E607. Zn(2+) is bound by residues H643, C645, and E667. The active-site Proton donor is H696. C728 is a Zn(2+) binding site.

Belongs to the vitamin-B12 independent methionine synthase family. Zn(2+) is required as a cofactor.

The catalysed reaction is 5-methyltetrahydropteroyltri-L-glutamate + L-homocysteine = tetrahydropteroyltri-L-glutamate + L-methionine. The protein operates within amino-acid biosynthesis; L-methionine biosynthesis via de novo pathway; L-methionine from L-homocysteine (MetE route): step 1/1. Catalyzes the transfer of a methyl group from 5-methyltetrahydrofolate to homocysteine resulting in methionine formation. This Pasteurella multocida (strain Pm70) protein is 5-methyltetrahydropteroyltriglutamate--homocysteine methyltransferase.